The primary structure comprises 83 residues: Pigment-dispersing hormone peptides (83 aa).

Positions 1–24 are cleaved as a signal peptide; sequence MRFIILGVLFIAVASMILSNGVMA. Ala80 is modified (alanine amide).

This sequence belongs to the arthropod PDH family. Strongly expressed in eyestalk tissue and cerebral ganglia (at protein level).

Its subcellular location is the secreted. In terms of biological role, the pigment-dispersing hormone causes the migration of the distal retinal pigment into the proximal end of the pigment chromatophore cells and thus decreases the amount of light entering the retinulas. May also function as a neurotransmitter and/or neuromodulator. The sequence is that of Pigment-dispersing hormone peptides from Eurydice pulchra (Speckled sea louse).